Consider the following 467-residue polypeptide: MSADVWSQGCERLATELPEQQFNTWIRPLPAAELVDRGDTAVATLRVPNRFKLDWIRNQYAARIESVLSDLAGKPVRLDLQLAAREAPPRPSSDAPRSNGHPQAAGQWLGAPSSSNAGAYTQASAPTPTHRLNTALTFDTLVPGRANQMARTAALHVAGAPGVMYNPLFIYGGVGLGKTHLIHAVGNALLRDKPDARILYLHAEQFITDVVKNYQRKTFDELKAKYHSLDLLLIDDVQFFAGKERTQEEFFNAFEALLAKRAHIIMTSDTYPKGLADIDERLTSRFDAGLTVAIEPPELEMRVAILMKKSDVEGTPMPEDVAFFVAKNVRANVRELEGALRKVLAYARFSQKDINIALAREALKDLLSIQNRQVGVENIQKTVADFYKIKVADMYSKKRPASIARPRQIAMYLAKELTQKSLPEIGELFGGRDHTTVLHAVRKIGGERGKNTELNQQLHVLEQTLKG.

The tract at residues 1–74 (MSADVWSQGC…ESVLSDLAGK (74 aa)) is domain I, interacts with DnaA modulators. A domain II region spans residues 74 to 130 (KPVRLDLQLAAREAPPRPSSDAPRSNGHPQAAGQWLGAPSSSNAGAYTQASAPTPTH). The tract at residues 85–127 (REAPPRPSSDAPRSNGHPQAAGQWLGAPSSSNAGAYTQASAPT) is disordered. The span at 112–127 (PSSSNAGAYTQASAPT) shows a compositional bias: polar residues. The segment at 131 to 347 (RLNTALTFDT…GALRKVLAYA (217 aa)) is domain III, AAA+ region. ATP-binding residues include Gly175, Gly177, Lys178, and Thr179. Positions 348–467 (RFSQKDINIA…LHVLEQTLKG (120 aa)) are domain IV, binds dsDNA.

This sequence belongs to the DnaA family. In terms of assembly, oligomerizes as a right-handed, spiral filament on DNA at oriC.

The protein resides in the cytoplasm. Its function is as follows. Plays an essential role in the initiation and regulation of chromosomal replication. ATP-DnaA binds to the origin of replication (oriC) to initiate formation of the DNA replication initiation complex once per cell cycle. Binds the DnaA box (a 9 base pair repeat at the origin) and separates the double-stranded (ds)DNA. Forms a right-handed helical filament on oriC DNA; dsDNA binds to the exterior of the filament while single-stranded (ss)DNA is stabiized in the filament's interior. The ATP-DnaA-oriC complex binds and stabilizes one strand of the AT-rich DNA unwinding element (DUE), permitting loading of DNA polymerase. After initiation quickly degrades to an ADP-DnaA complex that is not apt for DNA replication. Binds acidic phospholipids. The sequence is that of Chromosomal replication initiator protein DnaA from Methylibium petroleiphilum (strain ATCC BAA-1232 / LMG 22953 / PM1).